Consider the following 68-residue polypeptide: Protein SlyX homolog (68 aa).

Belongs to the SlyX family.

The chain is Protein SlyX homolog from Pseudomonas entomophila (strain L48).